Reading from the N-terminus, the 241-residue chain is Microneme antigen (241 aa).

An N-terminal signal peptide occupies residues 1–34; it reads MRLPIRFPKYVLYGMASAVWSILFLHILVGDTMS. Positions 35–103 are excised as a propeptide; it reads AADALSWSGG…ATGRGPSFVH (69 aa). The segment covering 61-83 has biased composition (basic and acidic residues); the sequence is HEMGKELEQQHGAEEQQMQRDTK. Residues 61-92 form a disordered region; sequence HEMGKELEQQHGAEEQQMQRDTKPAAFSNPPH. 2 PAN domains span residues 112–181 and 185–241; these read CFPH…PRSC and CTDN…FNKS. 6 disulfides stabilise this stretch: cysteine 112–cysteine 181, cysteine 137–cysteine 159, cysteine 141–cysteine 147, cysteine 185–cysteine 189, cysteine 210–cysteine 230, and cysteine 214–cysteine 220. Serine 121 is an a carbohydrate binding site. A carbohydrate-binding residues include lysine 162, tyrosine 169, and aspartate 174.

The protein belongs to the microneme antigen family. As to quaternary structure, homodimer or heterodimer of major microneme antigen and microneme antigen. Post-translationally, contains six disulfide bonds.

It localises to the cytoplasmic vesicle. The protein localises to the secretory vesicle. It is found in the microneme. Functionally, galactose-binding lectin. Plays a role in adhesion to the host cell. Has a potential role in invasion of host cells. This is Microneme antigen from Sarcocystis muris.